Reading from the N-terminus, the 311-residue chain is DNA-directed RNA polymerase subunit alpha (311 aa).

Residues 1-227 (MAQFQIECIE…NLFCSLRNLD (227 aa)) form an alpha N-terminal domain (alpha-NTD) region. Residues 239 to 311 (DKKISQVLIE…GISLPKEKSD (73 aa)) form an alpha C-terminal domain (alpha-CTD) region.

Belongs to the RNA polymerase alpha chain family. In plastids the minimal PEP RNA polymerase catalytic core is composed of four subunits: alpha, beta, beta', and beta''. When a (nuclear-encoded) sigma factor is associated with the core the holoenzyme is formed, which can initiate transcription.

Its subcellular location is the plastid. The protein localises to the chloroplast. The enzyme catalyses RNA(n) + a ribonucleoside 5'-triphosphate = RNA(n+1) + diphosphate. Its function is as follows. DNA-dependent RNA polymerase catalyzes the transcription of DNA into RNA using the four ribonucleoside triphosphates as substrates. In Pyropia yezoensis (Susabi-nori), this protein is DNA-directed RNA polymerase subunit alpha.